The primary structure comprises 430 residues: tRNA(Ile)-lysidine synthase (430 aa).

21-26 contacts ATP; it reads SGGLDS.

This sequence belongs to the tRNA(Ile)-lysidine synthase family.

It is found in the cytoplasm. It catalyses the reaction cytidine(34) in tRNA(Ile2) + L-lysine + ATP = lysidine(34) in tRNA(Ile2) + AMP + diphosphate + H(+). Ligates lysine onto the cytidine present at position 34 of the AUA codon-specific tRNA(Ile) that contains the anticodon CAU, in an ATP-dependent manner. Cytidine is converted to lysidine, thus changing the amino acid specificity of the tRNA from methionine to isoleucine. The sequence is that of tRNA(Ile)-lysidine synthase from Salmonella heidelberg (strain SL476).